The sequence spans 450 residues: Bifunctional protein GlmU (450 aa).

Residues 1 to 228 (MKTALVILAA…ESETLGINSR (228 aa)) form a pyrophosphorylase region. Residues 8 to 11 (LAAG), Lys-22, Gln-75, and 80 to 81 (GT) each bind UDP-N-acetyl-alpha-D-glucosamine. Position 105 (Asp-105) interacts with Mg(2+). Gly-140, Glu-154, Asn-169, and Asn-226 together coordinate UDP-N-acetyl-alpha-D-glucosamine. A Mg(2+)-binding site is contributed by Asn-226. Residues 229–249 (TELSAAEAAFQERARTNAFEN) are linker. The tract at residues 250–450 (GVTLPAPGTV…AKKAKQQRGS (201 aa)) is N-acetyltransferase. UDP-N-acetyl-alpha-D-glucosamine contacts are provided by Arg-315 and Lys-333. The active-site Proton acceptor is the His-345. UDP-N-acetyl-alpha-D-glucosamine contacts are provided by Tyr-348 and Asn-359. Residues Ala-362, 368-369 (NY), Ser-387, Ser-405, and Arg-422 contribute to the acetyl-CoA site.

It in the N-terminal section; belongs to the N-acetylglucosamine-1-phosphate uridyltransferase family. This sequence in the C-terminal section; belongs to the transferase hexapeptide repeat family. In terms of assembly, homotrimer. Mg(2+) serves as cofactor.

It is found in the cytoplasm. The enzyme catalyses alpha-D-glucosamine 1-phosphate + acetyl-CoA = N-acetyl-alpha-D-glucosamine 1-phosphate + CoA + H(+). It catalyses the reaction N-acetyl-alpha-D-glucosamine 1-phosphate + UTP + H(+) = UDP-N-acetyl-alpha-D-glucosamine + diphosphate. It functions in the pathway nucleotide-sugar biosynthesis; UDP-N-acetyl-alpha-D-glucosamine biosynthesis; N-acetyl-alpha-D-glucosamine 1-phosphate from alpha-D-glucosamine 6-phosphate (route II): step 2/2. It participates in nucleotide-sugar biosynthesis; UDP-N-acetyl-alpha-D-glucosamine biosynthesis; UDP-N-acetyl-alpha-D-glucosamine from N-acetyl-alpha-D-glucosamine 1-phosphate: step 1/1. The protein operates within bacterial outer membrane biogenesis; LPS lipid A biosynthesis. In terms of biological role, catalyzes the last two sequential reactions in the de novo biosynthetic pathway for UDP-N-acetylglucosamine (UDP-GlcNAc). The C-terminal domain catalyzes the transfer of acetyl group from acetyl coenzyme A to glucosamine-1-phosphate (GlcN-1-P) to produce N-acetylglucosamine-1-phosphate (GlcNAc-1-P), which is converted into UDP-GlcNAc by the transfer of uridine 5-monophosphate (from uridine 5-triphosphate), a reaction catalyzed by the N-terminal domain. The sequence is that of Bifunctional protein GlmU from Roseobacter denitrificans (strain ATCC 33942 / OCh 114) (Erythrobacter sp. (strain OCh 114)).